A 46-amino-acid chain; its full sequence is Defensin-1 (46 aa).

Cystine bridges form between Cys3–Cys46, Cys14–Cys35, Cys20–Cys40, and Cys24–Cys42.

The protein belongs to the DEFL family. As to expression, epidermis and vascular bundles of pods, stems, roots, leaves and wet or dry seeds.

Its function is as follows. Possesses antifungal activity sensitive to inorganic cations. In Pisum sativum (Garden pea), this protein is Defensin-1.